The sequence spans 359 residues: WAT1-related protein At5g64700 (359 aa).

10 consecutive transmembrane segments (helical) span residues 10 to 30 (LMVT…KAVF), 37 to 57 (FVFV…LAFF), 66 to 86 (LSFV…TLSL), 100 to 120 (LAAA…LLFG), 135 to 155 (LVGI…KGPL), 186 to 206 (WLKG…WLVL), 218 to 238 (LYFT…IAIA), 256 to 276 (AVIY…SWVI), 282 to 302 (VFLS…SAIL), and 306 to 326 (IISL…YCVL). 2 consecutive EamA domains span residues 18 to 136 (IYTI…AKLV) and 198 to 326 (ILWG…YCVL).

It belongs to the drug/metabolite transporter (DMT) superfamily. Plant drug/metabolite exporter (P-DME) (TC 2.A.7.4) family.

The protein localises to the membrane. In Arabidopsis thaliana (Mouse-ear cress), this protein is WAT1-related protein At5g64700.